The sequence spans 238 residues: Gas vesicle protein F (238 aa).

It belongs to the gas vesicle GvpF/GvpL family. Binds GvpA.

Its subcellular location is the gas vesicle. A minor component of the gas vesicle, may be involved in preventing GvpA aggregation during gas vesicle nucleation. Gas vesicles are hollow, gas filled proteinaceous nanostructures found in some microorganisms. It is not clear what function gas vesicles perform in soil bacteria. The chain is Gas vesicle protein F from Streptomyces sp. (strain CB03234).